We begin with the raw amino-acid sequence, 966 residues long: Alpha-1,4 glucan phosphorylase L-1 isozyme, chloroplastic/amyloplastic (966 aa).

A chloroplast-targeting transit peptide spans 1–50 (MATANGAHLFNHYSSNSRFIHFTSRNTSSKLFLTKTSHFRRPKRCFHVNN). Lysine 812 is modified (N6-(pyridoxal phosphate)lysine).

Belongs to the glycogen phosphorylase family. Pyridoxal 5'-phosphate serves as cofactor. In terms of tissue distribution, tuber.

Its subcellular location is the plastid. It localises to the chloroplast. The protein localises to the amyloplast. The enzyme catalyses [(1-&gt;4)-alpha-D-glucosyl](n) + phosphate = [(1-&gt;4)-alpha-D-glucosyl](n-1) + alpha-D-glucose 1-phosphate. Phosphorylase is an important allosteric enzyme in carbohydrate metabolism. Enzymes from different sources differ in their regulatory mechanisms and in their natural substrates. However, all known phosphorylases share catalytic and structural properties. In Solanum tuberosum (Potato), this protein is Alpha-1,4 glucan phosphorylase L-1 isozyme, chloroplastic/amyloplastic.